We begin with the raw amino-acid sequence, 554 residues long: Aspartyl/glutamyl-tRNA(Asn/Gln) amidotransferase subunit B (554 aa).

The segment at 491–554 is disordered; the sequence is AEQPTAPPPE…TPVSHQDAHA (64 aa). The segment covering 502–540 has biased composition (low complexity); that stretch reads ESAAETPEAPPAVEDAPPEAPTEAITAEAGSAEAITAAS.

It belongs to the GatB/GatE family. GatB subfamily. In terms of assembly, heterotrimer of A, B and C subunits.

It carries out the reaction L-glutamyl-tRNA(Gln) + L-glutamine + ATP + H2O = L-glutaminyl-tRNA(Gln) + L-glutamate + ADP + phosphate + H(+). The enzyme catalyses L-aspartyl-tRNA(Asn) + L-glutamine + ATP + H2O = L-asparaginyl-tRNA(Asn) + L-glutamate + ADP + phosphate + 2 H(+). Its function is as follows. Allows the formation of correctly charged Asn-tRNA(Asn) or Gln-tRNA(Gln) through the transamidation of misacylated Asp-tRNA(Asn) or Glu-tRNA(Gln) in organisms which lack either or both of asparaginyl-tRNA or glutaminyl-tRNA synthetases. The reaction takes place in the presence of glutamine and ATP through an activated phospho-Asp-tRNA(Asn) or phospho-Glu-tRNA(Gln). This chain is Aspartyl/glutamyl-tRNA(Asn/Gln) amidotransferase subunit B, found in Gloeobacter violaceus (strain ATCC 29082 / PCC 7421).